The primary structure comprises 318 residues: Ribose-phosphate pyrophosphokinase 1 (318 aa).

Residues 43–45 and 102–103 contribute to the ATP site; these read DGE and RQ. 2 residues coordinate Mg(2+): histidine 136 and aspartate 176. Lysine 199 is a catalytic residue. Residues arginine 201, aspartate 225, and 229–233 each bind D-ribose 5-phosphate; that span reads DTAGT.

It belongs to the ribose-phosphate pyrophosphokinase family. Class I subfamily. As to quaternary structure, homohexamer. The cofactor is Mg(2+).

Its subcellular location is the cytoplasm. It carries out the reaction D-ribose 5-phosphate + ATP = 5-phospho-alpha-D-ribose 1-diphosphate + AMP + H(+). The protein operates within metabolic intermediate biosynthesis; 5-phospho-alpha-D-ribose 1-diphosphate biosynthesis; 5-phospho-alpha-D-ribose 1-diphosphate from D-ribose 5-phosphate (route I): step 1/1. In terms of biological role, involved in the biosynthesis of the central metabolite phospho-alpha-D-ribosyl-1-pyrophosphate (PRPP) via the transfer of pyrophosphoryl group from ATP to 1-hydroxyl of ribose-5-phosphate (Rib-5-P). This is Ribose-phosphate pyrophosphokinase 1 from Listeria monocytogenes serotype 4b (strain F2365).